Consider the following 154-residue polypeptide: Ribosome maturation factor RimP (154 aa).

This sequence belongs to the RimP family.

The protein localises to the cytoplasm. Functionally, required for maturation of 30S ribosomal subunits. The sequence is that of Ribosome maturation factor RimP from Prochlorococcus marinus (strain MIT 9313).